Here is a 464-residue protein sequence, read N- to C-terminus: L-cysteine desulfhydrase-like protein lolT2 (464 aa).

Lys227 carries the N6-(pyridoxal phosphate)lysine modification.

It belongs to the class-V pyridoxal-phosphate-dependent aminotransferase family. Requires pyridoxal 5'-phosphate as cofactor.

The protein operates within alkaloid biosynthesis. Its function is as follows. L-cysteine desulfhydrase-like protein; part of the gene cluster that mediates the biosynthesis of loline alkaloids, potent insecticidal agents composed of a pyrrolizidine ring system and an uncommon ether bridge linking carbons 2 and 7. Lolines are structurally differentiated by the various modifications of the L-amino group and include norloline, loline, N-methylloline, N-acetylloline, N-acetylnorloline, and N-formylloline. The first committed step is the condensation of O-acetyl-L-homoserine (derived from L-aspartic acid) and L-proline, probably catalyzed by the gamma-type pyridoxal 5'-phosphate(PLP)-dependent enzyme lolC, to give the diamino diacid, NACPP. Ensuing cyclization, decarboxylation, and acetylation steps yield 1-exo-acetamidopyrrolizidine (AcAP). LolO is required for installation of the ether bridge upon the pathway intermediate, 1-exo-acetamidopyrrolizidine (AcAP). In sequential 2-oxoglutarate- and O(2)-consuming steps, lolO removes hydrogens from C2 and C7 of AcAP to form both carbon-oxygen bonds in N-acetylnorloline (NANL), the precursor to all other lolines. The enzymes lolD, lolE, lolF and lolT have also been proposed to be involved in the ether-bridge installation. Further processing of the exocyclic moiety of NANL by fungal N-acetamidase (LolN), methyltransferase (LolM), and cytochrome P450 (LolP) enzymes, with occasional involvement of a plant acetyltransferase, generates the other known lolines. LolN transforms NANL to norlonine which is monomethylated and dimethylated to respectively lonine and N-methyllonine (NML) by lolM. LolP catalyzes hydroxylation of the methyl group in N-methylloline (NML) and further oxygenation to N-formylloline (NFL). A plant acetyltransferase is responsible for the acetylation of loline to form N-acetylloline (NAL). LolA might interact with aspartate kinase to prevent feedback inhibition of its activity by these end products and thereby promote production of L-homoserine from L-aspartate. The polypeptide is L-cysteine desulfhydrase-like protein lolT2 (Epichloe uncinata (Endophyte fungus)).